The following is a 1055-amino-acid chain: MIDVNKFESMQIGLASPDKIRMWSYGEVKKPETINYRTLKPEKDGLFDERIFGPTKDYECACGKYKRIRYKGIVCDRCGVEVTKSKVRRERMGHIELAAPVTHIWYFKGIPSRMGLVLDMSPRSLEEIIYFASYVVVDPGDTPLEKKQLLTEREYRAKLDEYGNRFVAKIGGEAIQALLQSVDLEKEANLLKEELKEASGQKRTRAVRRLDIIEAFIKSGNHPDWMVMDAIPVMPPDLRPMVQLDGGRFATSDLKHLYRRVINRNNRLKRLLDLNAPGIIVQNEKRMLQEAVDALIDNGRRGRPVAGPGNRPLKSLSHMLKGKQEGFRQNLLGKRVDYSGRSVIDVGPSLKMNQMGLPVPMAMELFKPFIMKELVSRNLASNIKNAKRKIDRKDEEVYDVLEDVIKEHPVLLNRAPTLHRLGIQAFEPVLVSGKAMRLHPLACEAYNADFDGDQMAIHVPLSNEAQAEARLLMLAAHHILAPKDGKPVVTPSQDMVIGNYWLTMERAESVGEGMIFNDLDEVKLALQNGYVSIHTRIGVRASSMPEKPFTDQQRQQILITTAGKMLFNDILPKDFVYLNAPTNEKLVNGTPDEYFLEAGEDIHEQLNQRPLLSPFKSGFLSDVIAEVYKQYKVTETSLLLDRMKDLGFYRSTLSGLTVGIADITNLPDKPAIIAAAHKKVATVTKQFRRGLITDDERYERVIGIWNDAKDEIQQRLMDTFDPQNPIFMMSDSGARGNISNFTQLAGMRGLMAAPNGKIMELPILSNFREGLSVLEMFISTHGARKGMTDTALKTANSGYLTRRLVDVAQDVIVREKDCGTDRGLLITAIAEGNEMIEPLYDRILGRYTMKSVINPETGKVIVGQNEMIDERSAQEIIDAGIQEVTIRSAFTCNTAHGVCEKCYGRNMATGDRVEVGEAVGTVAAQSIGEPGTQLTMRNFHTGGVAGNADITQGLPRIQEIVEARNPKGPAEISEVTGVVESIEEDPAEGTKEVTVKGETDSRTYSLPITARMKVAEGDYIHRGAPLNEGSIDPKKLIKVRDVLSTENYLLSEIQK.

Residues Cys60, Cys62, Cys75, and Cys78 each contribute to the Zn(2+) site. Asp449, Asp451, and Asp453 together coordinate Mg(2+). Zn(2+) is bound by residues Cys818, Cys892, Cys899, and Cys902.

This sequence belongs to the RNA polymerase beta' chain family. As to quaternary structure, the RNAP catalytic core consists of 2 alpha, 1 beta, 1 beta' and 1 omega subunit. When a sigma factor is associated with the core the holoenzyme is formed, which can initiate transcription. It depends on Mg(2+) as a cofactor. Zn(2+) is required as a cofactor.

The catalysed reaction is RNA(n) + a ribonucleoside 5'-triphosphate = RNA(n+1) + diphosphate. Functionally, DNA-dependent RNA polymerase catalyzes the transcription of DNA into RNA using the four ribonucleoside triphosphates as substrates. This is DNA-directed RNA polymerase subunit beta' from Pediococcus acidilactici.